A 97-amino-acid polypeptide reads, in one-letter code: Co-chaperonin GroES (97 aa).

This sequence belongs to the GroES chaperonin family. In terms of assembly, heptamer of 7 subunits arranged in a ring. Interacts with the chaperonin GroEL.

The protein resides in the cytoplasm. Functionally, together with the chaperonin GroEL, plays an essential role in assisting protein folding. The GroEL-GroES system forms a nano-cage that allows encapsulation of the non-native substrate proteins and provides a physical environment optimized to promote and accelerate protein folding. GroES binds to the apical surface of the GroEL ring, thereby capping the opening of the GroEL channel. This chain is Co-chaperonin GroES, found in Yersinia enterocolitica.